Reading from the N-terminus, the 258-residue chain is Serine protease VLSP-3 (258 aa).

Positions 1-18 are cleaved as a signal peptide; sequence MVLIRVLANLLVLQLSYA. Positions 19–24 are excised as a propeptide; it reads QKSSEL. A Peptidase S1 domain is found at 25-249; that stretch reads VIGGDECNIN…YTDWIQSIIA (225 aa). Intrachain disulfides connect C31-C163, C50-C66, C98-C256, C142-C210, C174-C189, and C200-C225. The N-linked (GlcNAc...) asparagine glycan is linked to N44. The active-site Charge relay system is H65. Residues N79 and N103 are each glycosylated (N-linked (GlcNAc...) asparagine). D110 (charge relay system) is an active-site residue. 2 N-linked (GlcNAc...) asparagine glycosylation sites follow: N154 and N170. Catalysis depends on S204, which acts as the Charge relay system. An N-linked (GlcNAc...) asparagine glycan is attached at N251.

It belongs to the peptidase S1 family. Snake venom subfamily. In terms of assembly, monomer. Expressed by the venom gland.

The protein resides in the secreted. Snake venom serine protease that may act in the hemostasis system of the prey. In Macrovipera lebetinus (Levantine viper), this protein is Serine protease VLSP-3.